Here is a 191-residue protein sequence, read N- to C-terminus: Protein Ves (191 aa).

Belongs to the Ves family.

The protein is Protein Ves of Escherichia coli O7:K1 (strain IAI39 / ExPEC).